The chain runs to 607 residues: MNRVNDMSPVEGDLGLQLSSEADKKFDAYMKRHGLFEPGNLSNNDKERNLEDQFNSMKLSPVASSKENYPDNHMHSKHISKLPIASPIPRGLDRSGELSYKDNNHWSDRSSTGSPRWENGSMNLSVEEMEKVVQPKVKRMATICQMFFLDHYFEQLHYLYTRKQRARLFEEQLLKEPDSRRDELVKRYNGRERVYLRKRRTRISHGDFQTITQVGQGGYGSVWLARKRDTKEIVALKIMNKSVLHKMDEIRHVLTERDILTTANSEWLVRLLYAFQDTSNIYLAMEFVPGGDFRTLLSNSGVLRDHHAKFYATEMFLAIDALHQLGYIHRDLKPENFLVGASGHIKLTDFGLSSGIISKKKIESMKIRLQEVNNVVVPERSMRERRQVFRTLLSQDPVYAHSVVGSPDYMAPEVLRGENYNHSVDYWSLGCIMYECLSGFPPFSGSNVNETWSNLKNWRKCFQRPHYDDPRDLEFNWRDDAWDFVCHCITDPKDRFCSLKQVMQHPYFSKIDWKNVRTAYRPPFVPDLNSEIDAGYFDDFTNENDMSKYKEVHEKQAAIANMVNTFNKPKRNAFIGFTFRHQKNSHPTSSSSALSSPLSAPSFGTLL.

A phosphoserine mark is found at S56, S60, S65, and S86. Positions D93–D108 are enriched in basic and acidic residues. The interval D93–E118 is disordered. Residues R109–E118 are compositionally biased toward polar residues. Positions F208–F508 constitute a Protein kinase domain. ATP contacts are provided by residues V214 to V222 and K237. At Y219 the chain carries Phosphotyrosine. The active-site Proton acceptor is D331. Residue S402 is modified to Phosphoserine. One can recognise an AGC-kinase C-terminal domain in the interval S509 to S589. The disordered stretch occupies residues H586 to L607. Residues S589–L607 are compositionally biased toward low complexity.

The protein belongs to the protein kinase superfamily. Ser/Thr protein kinase family. In terms of assembly, interacts with mob1 and cdc11.

The protein localises to the cytoplasm. It is found in the cytoskeleton. Its subcellular location is the microtubule organizing center. The protein resides in the spindle pole body. It carries out the reaction L-seryl-[protein] + ATP = O-phospho-L-seryl-[protein] + ADP + H(+). The catalysed reaction is L-threonyl-[protein] + ATP = O-phospho-L-threonyl-[protein] + ADP + H(+). Part of a signaling pathway. Required for initiation of medial ring constriction and septation. This chain is Serine/threonine-protein kinase sid2 (sid2), found in Schizosaccharomyces pombe (strain 972 / ATCC 24843) (Fission yeast).